Here is a 701-residue protein sequence, read N- to C-terminus: C6 finger domain transcription factor nscR (701 aa).

The segment at residues 17–43 is a DNA-binding region (zn(2)-C6 fungal-type); that stretch reads CELCRERKVKCDKLDPCTNCSSAGVIC.

The protein localises to the nucleus. In terms of biological role, transcription factor that specifically regulates the neosartoricin B biosynthesis gene cluster. The chain is C6 finger domain transcription factor nscR from Arthroderma benhamiae (strain ATCC MYA-4681 / CBS 112371) (Trichophyton mentagrophytes).